We begin with the raw amino-acid sequence, 79 residues long: Putative sulfur carrier protein TM_0983 (79 aa).

Catalysis depends on Cys17, which acts as the Cysteine persulfide intermediate.

It belongs to the sulfur carrier protein TusA family.

The chain is Putative sulfur carrier protein TM_0983 from Thermotoga maritima (strain ATCC 43589 / DSM 3109 / JCM 10099 / NBRC 100826 / MSB8).